An 817-amino-acid chain; its full sequence is DNA-directed RNA polymerase subunit beta'' (817 aa).

Residues Cys219, Cys291, Cys298, and Cys301 each coordinate Zn(2+).

Belongs to the RNA polymerase beta' chain family. RpoC2 subfamily. In plastids the minimal PEP RNA polymerase catalytic core is composed of four subunits: alpha, beta, beta', and beta''. When a (nuclear-encoded) sigma factor is associated with the core the holoenzyme is formed, which can initiate transcription. Zn(2+) serves as cofactor.

Its subcellular location is the plastid. The catalysed reaction is RNA(n) + a ribonucleoside 5'-triphosphate = RNA(n+1) + diphosphate. DNA-dependent RNA polymerase catalyzes the transcription of DNA into RNA using the four ribonucleoside triphosphates as substrates. The chain is DNA-directed RNA polymerase subunit beta'' (rpoC2) from Euglena longa (Euglenophycean alga).